The primary structure comprises 489 residues: RNA polymerase II subunit 5-mediating protein homolog (489 aa).

Disordered stretches follow at residues 141–188 (NSDE…MDEE), 200–329 (EEKE…EEDE), 396–415 (ILKTNSSGNLMSTIPKSYNE), and 434–489 (FENQ…RQNK). Over residues 157-168 (QKSTTTTTTTTT) the composition is skewed to low complexity. Composition is skewed to basic and acidic residues over residues 169-188 (SKDKPKTEEEKKKSKEMDEE) and 215-224 (FNKKFNKKLD). Composition is skewed to acidic residues over residues 227–265 (GSDEEYDDDNYNNNNDDDDDNDEDDDREYYQEEGFEDEK), 276–298 (EEDDHDDDDDYYDEGEEIVEYYD), and 315–329 (QGDDDNDDNDNEEDE). Residues 396–413 (ILKTNSSGNLMSTIPKSY) show a composition bias toward polar residues. The segment covering 480 to 489 (SRFKSSRQNK) has biased composition (basic residues).

The protein belongs to the RNA polymerase II subunit 5-mediating protein family.

It localises to the nucleus. This Dictyostelium discoideum (Social amoeba) protein is RNA polymerase II subunit 5-mediating protein homolog (rmp).